The chain runs to 336 residues: Serpentine receptor class gamma-13 (336 aa).

Helical transmembrane passes span 32-52 (LKYI…FLII), 68-88 (FFII…SEIL), 93-113 (FIYV…PSIF), 133-153 (VFLS…SAIW), 156-176 (ILTP…WNVL), 210-230 (FIVS…ALLI), 246-266 (TMVL…FAFF), and 277-297 (LLRV…IIFI).

Belongs to the nematode receptor-like protein srg family.

It localises to the membrane. This is Serpentine receptor class gamma-13 (srg-13) from Caenorhabditis elegans.